The sequence spans 266 residues: E3 ubiquitin-protein ligase RNF170 (266 aa).

Over 1–26 (MEGSVCVDGAAAPAPDEASLIEGVSN) the chain is Lumenal. A helical transmembrane segment spans residues 27–47 (AVLLVLVLSVTLLAGLTTLLC). The Cytoplasmic segment spans residues 48–209 (RSEQQRIHPE…GGLFWMFRVR (162 aa)). Residues 88-131 (CPVCLQQAVLPVETNCGHLFCGSCIIAYWRYGTWLGAISCPICR) form an RING-type zinc finger. A helical membrane pass occupies residues 210–230 (ILLCVCGALAYLVSPLDFLPE). Residue G231 is a topological domain, lumenal. The chain crosses the membrane as a helical span at residues 232–252 (VLGLLGFLDDFFVILLLFIYI). Over 253-266 (SIMYREVVTQRLAG) the chain is Cytoplasmic.

As to expression, highly expressed in the developing brain, and less within intersomitic structures of the trunk.

The protein localises to the endoplasmic reticulum membrane. The catalysed reaction is S-ubiquitinyl-[E2 ubiquitin-conjugating enzyme]-L-cysteine + [acceptor protein]-L-lysine = [E2 ubiquitin-conjugating enzyme]-L-cysteine + N(6)-ubiquitinyl-[acceptor protein]-L-lysine.. It functions in the pathway protein modification; protein ubiquitination. In terms of biological role, E3 ubiquitin-protein ligase that plays an essential role in stimulus-induced inositol 1,4,5-trisphosphate receptor (ITPR) ubiquitination and degradation via the endoplasmic reticulum-associated degradation (ERAD) pathway. Also involved in ITPR turnover in resting cells. In Danio rerio (Zebrafish), this protein is E3 ubiquitin-protein ligase RNF170 (rnf170).